We begin with the raw amino-acid sequence, 322 residues long: Lipoyl synthase (322 aa).

Positions 68, 73, 79, 94, 98, 101, and 309 each coordinate [4Fe-4S] cluster. Positions 80 to 298 (FNHGTASFMI…RVAGVEMGFS (219 aa)) constitute a Radical SAM core domain.

The protein belongs to the radical SAM superfamily. Lipoyl synthase family. It depends on [4Fe-4S] cluster as a cofactor.

It localises to the cytoplasm. It catalyses the reaction [[Fe-S] cluster scaffold protein carrying a second [4Fe-4S](2+) cluster] + N(6)-octanoyl-L-lysyl-[protein] + 2 oxidized [2Fe-2S]-[ferredoxin] + 2 S-adenosyl-L-methionine + 4 H(+) = [[Fe-S] cluster scaffold protein] + N(6)-[(R)-dihydrolipoyl]-L-lysyl-[protein] + 4 Fe(3+) + 2 hydrogen sulfide + 2 5'-deoxyadenosine + 2 L-methionine + 2 reduced [2Fe-2S]-[ferredoxin]. It participates in protein modification; protein lipoylation via endogenous pathway; protein N(6)-(lipoyl)lysine from octanoyl-[acyl-carrier-protein]: step 2/2. Catalyzes the radical-mediated insertion of two sulfur atoms into the C-6 and C-8 positions of the octanoyl moiety bound to the lipoyl domains of lipoate-dependent enzymes, thereby converting the octanoylated domains into lipoylated derivatives. In Idiomarina loihiensis (strain ATCC BAA-735 / DSM 15497 / L2-TR), this protein is Lipoyl synthase.